A 245-amino-acid polypeptide reads, in one-letter code: Fibroblast growth factor 13 (245 aa).

Disordered regions lie at residues 1-37 (MAAA…SKGN) and 213-245 (TEFS…NDST). The segment at 1–62 (MAAAIASSLI…GSKKRRRRRP (62 aa)) is mediates targeting to the nucleus. The segment covering 215 to 245 (FSRSGSGTPTKSRSVSGVLNGGKSMSQNDST) has biased composition (polar residues).

Belongs to the heparin-binding growth factors family.

It localises to the cell projection. It is found in the filopodium. The protein resides in the growth cone. The protein localises to the dendrite. Its subcellular location is the cell membrane. It localises to the sarcolemma. It is found in the cytoplasm. Its function is as follows. Microtubule-binding protein which directly binds tubulin and is involved in both polymerization and stabilization of microtubules. Through its action on microtubules, may participate in the refinement of axons by negatively regulating axonal and leading processes branching. Plays a crucial role in neuron polarization and migration. Regulates voltage-gated sodium channel transport and function. Required for proper head development, it is involved in neural differentiation through regulation of the mek5-erk5 pathway. The polypeptide is Fibroblast growth factor 13 (fgf13) (Xenopus laevis (African clawed frog)).